A 390-amino-acid polypeptide reads, in one-letter code: Queuine tRNA-ribosyltransferase (390 aa).

D90 acts as the Proton acceptor in catalysis. Residues 90–94 (DSGGF), D144, Q197, and G224 contribute to the substrate site. Residues 255-261 (GVGTPED) form an RNA binding region. D274 (nucleophile) is an active-site residue. An RNA binding; important for wobble base 34 recognition region spans residues 279 to 283 (TRNAR). Positions 312, 314, 317, and 354 each coordinate Zn(2+).

Belongs to the queuine tRNA-ribosyltransferase family. In terms of assembly, homodimer. Within each dimer, one monomer is responsible for RNA recognition and catalysis, while the other monomer binds to the replacement base PreQ1. Requires Zn(2+) as cofactor.

The enzyme catalyses 7-aminomethyl-7-carbaguanine + guanosine(34) in tRNA = 7-aminomethyl-7-carbaguanosine(34) in tRNA + guanine. It functions in the pathway tRNA modification; tRNA-queuosine biosynthesis. Functionally, catalyzes the base-exchange of a guanine (G) residue with the queuine precursor 7-aminomethyl-7-deazaguanine (PreQ1) at position 34 (anticodon wobble position) in tRNAs with GU(N) anticodons (tRNA-Asp, -Asn, -His and -Tyr). Catalysis occurs through a double-displacement mechanism. The nucleophile active site attacks the C1' of nucleotide 34 to detach the guanine base from the RNA, forming a covalent enzyme-RNA intermediate. The proton acceptor active site deprotonates the incoming PreQ1, allowing a nucleophilic attack on the C1' of the ribose to form the product. After dissociation, two additional enzymatic reactions on the tRNA convert PreQ1 to queuine (Q), resulting in the hypermodified nucleoside queuosine (7-(((4,5-cis-dihydroxy-2-cyclopenten-1-yl)amino)methyl)-7-deazaguanosine). The sequence is that of Queuine tRNA-ribosyltransferase from Leptothrix cholodnii (strain ATCC 51168 / LMG 8142 / SP-6) (Leptothrix discophora (strain SP-6)).